The following is a 71-amino-acid chain: Cytochrome c oxidase subunit 8C, mitochondrial (71 aa).

The N-terminal 28 residues, 1-28, are a transit peptide targeting the mitochondrion; that stretch reads MAHLPRVCPFIRRLRVALLCLRPGHRFA. Residues 29–39 lie on the Mitochondrial matrix side of the membrane; that stretch reads HSEPQRQRPAS. A helical membrane pass occupies residues 40–63; the sequence is ALEMAVGIVVIFSAFLTPSAYVLS. The Mitochondrial intermembrane segment spans residues 64–71; it reads NLSQFRRE.

It belongs to the cytochrome c oxidase VIII family. As to quaternary structure, component of the cytochrome c oxidase (complex IV, CIV), a multisubunit enzyme composed of 14 subunits. The complex is composed of a catalytic core of 3 subunits MT-CO1, MT-CO2 and MT-CO3, encoded in the mitochondrial DNA, and 11 supernumerary subunits COX4I, COX5A, COX5B, COX6A, COX6B, COX6C, COX7A, COX7B, COX7C, COX8 and NDUFA4, which are encoded in the nuclear genome. The complex exists as a monomer or a dimer and forms supercomplexes (SCs) in the inner mitochondrial membrane with NADH-ubiquinone oxidoreductase (complex I, CI) and ubiquinol-cytochrome c oxidoreductase (cytochrome b-c1 complex, complex III, CIII), resulting in different assemblies (supercomplex SCI(1)III(2)IV(1) and megacomplex MCI(2)III(2)IV(2)).

Its subcellular location is the mitochondrion inner membrane. It functions in the pathway energy metabolism; oxidative phosphorylation. Functionally, component of the cytochrome c oxidase, the last enzyme in the mitochondrial electron transport chain which drives oxidative phosphorylation. The respiratory chain contains 3 multisubunit complexes succinate dehydrogenase (complex II, CII), ubiquinol-cytochrome c oxidoreductase (cytochrome b-c1 complex, complex III, CIII) and cytochrome c oxidase (complex IV, CIV), that cooperate to transfer electrons derived from NADH and succinate to molecular oxygen, creating an electrochemical gradient over the inner membrane that drives transmembrane transport and the ATP synthase. Cytochrome c oxidase is the component of the respiratory chain that catalyzes the reduction of oxygen to water. Electrons originating from reduced cytochrome c in the intermembrane space (IMS) are transferred via the dinuclear copper A center (CU(A)) of subunit 2 and heme A of subunit 1 to the active site in subunit 1, a binuclear center (BNC) formed by heme A3 and copper B (CU(B)). The BNC reduces molecular oxygen to 2 water molecules using 4 electrons from cytochrome c in the IMS and 4 protons from the mitochondrial matrix. This Eulemur fulvus fulvus (Brown lemur) protein is Cytochrome c oxidase subunit 8C, mitochondrial (COX8C).